A 260-amino-acid polypeptide reads, in one-letter code: Transcription repressor OFP13 (260 aa).

The 62-residue stretch at 150 to 211 (VAMESEDPYG…VSAFVDLLSG (62 aa)) folds into the OVATE domain.

As to expression, expressed in roots, rosette and cauline leaves, shoots, stems, flower buds and siliques.

The protein resides in the nucleus. Transcriptional repressor that regulates multiple aspects of plant growth and development through the regulation of BEL1-LIKE (BLH) and KNOX TALE (KNAT) homeodomain transcription factors. This Arabidopsis thaliana (Mouse-ear cress) protein is Transcription repressor OFP13 (OFP13).